Reading from the N-terminus, the 579-residue chain is Aspartate--tRNA(Asp/Asn) ligase (579 aa).

E171 serves as a coordination point for L-aspartate. Residues 195-198 (QLFK) form an aspartate region. R217 is an L-aspartate binding site. ATP is bound by residues 217 to 219 (RDE) and Q226. H444 is a binding site for L-aspartate. E475 provides a ligand contact to ATP. R482 lines the L-aspartate pocket. 527 to 530 (GLDR) contacts ATP.

It belongs to the class-II aminoacyl-tRNA synthetase family. Type 1 subfamily. Homodimer.

It is found in the cytoplasm. It carries out the reaction tRNA(Asx) + L-aspartate + ATP = L-aspartyl-tRNA(Asx) + AMP + diphosphate. Aspartyl-tRNA synthetase with relaxed tRNA specificity since it is able to aspartylate not only its cognate tRNA(Asp) but also tRNA(Asn). Reaction proceeds in two steps: L-aspartate is first activated by ATP to form Asp-AMP and then transferred to the acceptor end of tRNA(Asp/Asn). The chain is Aspartate--tRNA(Asp/Asn) ligase from Thermotoga neapolitana (strain ATCC 49049 / DSM 4359 / NBRC 107923 / NS-E).